An 84-amino-acid chain; its full sequence is uncharacterized protein (84 aa).

Residues alanine 34–alanine 54 are compositionally biased toward low complexity. The disordered stretch occupies residues alanine 34–methionine 57. Asparagine 45 carries N-linked (GlcNAc...) asparagine glycosylation. A helical transmembrane segment spans residues tyrosine 66 to glycine 83.

Its subcellular location is the endoplasmic reticulum membrane. This is an uncharacterized protein from Saccharomyces cerevisiae (strain ATCC 204508 / S288c) (Baker's yeast).